The chain runs to 125 residues: Mitochondrial import inner membrane translocase subunit TIM16 (125 aa).

Positions E58 to R110 are J-like. Phosphoserine is present on S69.

Belongs to the TIM16/PAM16 family. As to quaternary structure, probable component of the PAM complex at least composed of a mitochondrial HSP70 protein, GRPEL1 or GRPEL2, TIMM44, TIMM16/PAM16 and TIMM14/DNAJC19. Interacts with DNAJC19. Directly interacts with DNAJC15; this interaction counteracts DNAJC15-dependent stimulation of HSPA9 ATPase activity. Associates with the TIM23 complex. Expressed in trabecular bone and cartilage and by differentiated chondrocytes localized in the hypertrophic zone and by osteoblasts at early developmental stages.

The protein resides in the mitochondrion inner membrane. Functionally, regulates ATP-dependent protein translocation into the mitochondrial matrix. Inhibits DNAJC19 stimulation of HSPA9/Mortalin ATPase activity. This chain is Mitochondrial import inner membrane translocase subunit TIM16, found in Mus musculus (Mouse).